Consider the following 312-residue polypeptide: MLQYQIDRIEHQITDDRSQTGVFLIGPLERGQATTLGNSLRRMLMGNLAGTAVTAVRIAGVNHEYATIPGVREDVLDILLNCKQLTVTSRTDELEIGRLIVSGPAVVKAKDLQFSSQVQVVDGERPIATVSEGHSLELEVHVERGVGYRPVDRHNEDTSAIDLLQIDAVFMPVHRVNFTTDETAVAEGGSARERLRMEVVTDGSMTPDDAIAQAANQLIELFQPLATVTMVEEPGIEPEPSAEAQIPLEELNLSVRAYNCLKRAQVNSVSDLMGFSYEDLLEIKNFGSKSADEVIEALERIGISIPQSRTSV.

Residues 1 to 229 (MLQYQIDRIE…ELFQPLATVT (229 aa)) are alpha N-terminal domain (alpha-NTD). The alpha C-terminal domain (alpha-CTD) stretch occupies residues 236–312 (IEPEPSAEAQ…ISIPQSRTSV (77 aa)).

It belongs to the RNA polymerase alpha chain family. As to quaternary structure, in cyanobacteria the RNAP catalytic core is composed of 2 alpha, 1 beta, 1 beta', 1 gamma and 1 omega subunit. When a sigma factor is associated with the core the holoenzyme is formed, which can initiate transcription.

It carries out the reaction RNA(n) + a ribonucleoside 5'-triphosphate = RNA(n+1) + diphosphate. Functionally, DNA-dependent RNA polymerase catalyzes the transcription of DNA into RNA using the four ribonucleoside triphosphates as substrates. The chain is DNA-directed RNA polymerase subunit alpha from Synechococcus sp. (strain CC9311).